The primary structure comprises 868 residues: Translation initiation factor IF-2 (868 aa).

Disordered regions lie at residues 49–72 (LSKQ…TSTL) and 92–276 (KRSD…EHLK). Over residues 92–240 (KRSDIEEQQR…KKAEAEEVHL (149 aa)) the composition is skewed to basic and acidic residues. Residues 368 to 537 (SRAPVVTIMG…VLQSELLDLQ (170 aa)) enclose the tr-type G domain. The interval 377-384 (GHVDHGKT) is G1. 377 to 384 (GHVDHGKT) serves as a coordination point for GTP. The interval 402–406 (GITQH) is G2. A G3 region spans residues 423–426 (DTPG). Residues 423–427 (DTPGH) and 477–480 (NKMD) contribute to the GTP site. A G4 region spans residues 477–480 (NKMD). A G5 region spans residues 513 to 515 (SAK).

This sequence belongs to the TRAFAC class translation factor GTPase superfamily. Classic translation factor GTPase family. IF-2 subfamily.

The protein resides in the cytoplasm. Functionally, one of the essential components for the initiation of protein synthesis. Protects formylmethionyl-tRNA from spontaneous hydrolysis and promotes its binding to the 30S ribosomal subunits. Also involved in the hydrolysis of GTP during the formation of the 70S ribosomal complex. This is Translation initiation factor IF-2 from Alteromonas mediterranea (strain DSM 17117 / CIP 110805 / LMG 28347 / Deep ecotype).